The sequence spans 632 residues: PAN2-PAN3 deadenylation complex subunit PAN3 (632 aa).

Disordered regions lie at residues 1-22 (MQPG…PHQL) and 99-127 (PTFG…PPTL). Basic residues predominate over residues 107 to 116 (MNHRASHHHQ). Residues 117-127 (SPQMAQQPPTL) show a composition bias toward polar residues. The pseudokinase domain stretch occupies residues 223 to 494 (KADSAIIGDI…TINEIMPMIG (272 aa)). ATP contacts are provided by residues Arg-270, 321–328 (DYYPLAGT), and 397–398 (NK). A coiled-coil region spans residues 495–533 (GRFFTVMENMQAKTDVLEAELSREMENGRLFRLVAKMNT). The tract at residues 534 to 632 (VLERVEHGTD…LLGTNMMLHR (99 aa)) is knob domain.

The protein belongs to the protein kinase superfamily. PAN3 family. In terms of assembly, homodimer. Forms a heterotrimer with a catalytic subunit PAN2 to form the poly(A)-nuclease (PAN) deadenylation complex. Interacts (via PAM-2 motif) with poly(A)-binding protein (via PABC domain), conferring substrate specificity of the enzyme complex. Interacts with the GW182 family protein ain-1. In terms of tissue distribution, highly expressed in germ cells.

It is found in the cytoplasm. It localises to the P-body. Regulatory subunit of the poly(A)-nuclease (PAN) deadenylation complex, one of two cytoplasmic mRNA deadenylases involved in general and miRNA-mediated mRNA turnover. PAN specifically shortens poly(A) tails of RNA and the activity is stimulated by poly(A)-binding protein (PABP). PAN deadenylation is followed by rapid degradation of the shortened mRNA tails by the CCR4-NOT complex. Deadenylated mRNAs are then degraded by two alternative mechanisms, namely exosome-mediated 3'-5' exonucleolytic degradation, or deadenylation-dependent mRNA decaping and subsequent 5'-3' exonucleolytic degradation by XRN1. PAN3 acts as a positive regulator for PAN activity, recruiting the catalytic subunit PAN2 to mRNA via its interaction with RNA and PABP, and to miRNA targets via its interaction with GW182 family proteins. Within the PAN complex, may positively regulate fertility. The sequence is that of PAN2-PAN3 deadenylation complex subunit PAN3 from Caenorhabditis elegans.